We begin with the raw amino-acid sequence, 445 residues long: 3-phosphoshikimate 1-carboxyvinyltransferase (445 aa).

Positions 34, 35, and 39 each coordinate 3-phosphoshikimate. Lysine 34 lines the phosphoenolpyruvate pocket. Residues glycine 112 and arginine 140 each coordinate phosphoenolpyruvate. Residues serine 186, serine 187, glutamine 188, serine 216, glutamate 331, and histidine 358 each coordinate 3-phosphoshikimate. Glutamine 188 contacts phosphoenolpyruvate. Glutamate 331 acts as the Proton acceptor in catalysis. Arginine 362, arginine 403, and lysine 428 together coordinate phosphoenolpyruvate.

Belongs to the EPSP synthase family. Monomer.

It localises to the cytoplasm. The catalysed reaction is 3-phosphoshikimate + phosphoenolpyruvate = 5-O-(1-carboxyvinyl)-3-phosphoshikimate + phosphate. It functions in the pathway metabolic intermediate biosynthesis; chorismate biosynthesis; chorismate from D-erythrose 4-phosphate and phosphoenolpyruvate: step 6/7. Catalyzes the transfer of the enolpyruvyl moiety of phosphoenolpyruvate (PEP) to the 5-hydroxyl of shikimate-3-phosphate (S3P) to produce enolpyruvyl shikimate-3-phosphate and inorganic phosphate. This chain is 3-phosphoshikimate 1-carboxyvinyltransferase, found in Kocuria rhizophila (strain ATCC 9341 / DSM 348 / NBRC 103217 / DC2201).